The chain runs to 1425 residues: Neuropathy target esterase sws (1425 aa).

The Lumenal segment spans residues 1-34; it reads MDVLEMLRASASGSYNTIFSDAWCQYVSKQITAT. Residues 35-55 form a helical membrane-spanning segment; sequence VYMYFALVMMSLLFIAWFLYF. Over 56–1425 the chain is Cytoplasmic; it reads KRMARLRLRD…RSSPNNETKN (1370 aa). Position 174-301 (174-301) interacts with a nucleoside 3',5'-cyclic phosphate; the sequence is IFGHFEKPVF…IRVIQVIMIR (128 aa). Polar residues-rich tracts occupy residues 332 to 348 and 357 to 366; these read TMSG…SRQA and SQMNLMQSAV. Residues 332 to 410 are disordered; that stretch reads TMSGPINSQT…NPDGSFHGTT (79 aa). Residues 367–381 are compositionally biased toward low complexity; sequence SGTGSSGVSVTVTRP. A phosphoserine mark is found at S444 and S453. A nucleoside 3',5'-cyclic phosphate-binding positions include 482 to 609 and 598 to 727; these read ELGL…VVRR and IVLD…HRFL. Positions 952 to 1118 constitute a PNPLA domain; it reads LVLGGGGARG…VNNLPADVMH (167 aa). Positions 956-961 match the GXGXXG motif; sequence GGGARG. The GXSXG signature appears at 983–987; that stretch reads GVSIG. Catalysis depends on S985, which acts as the Nucleophile. The active-site Proton acceptor is the D1105. The DGA/G signature appears at 1105 to 1107; that stretch reads DGG. Position 1160 is a phosphoserine (S1160). The interval 1330–1425 is disordered; that stretch reads LERKTDKSTQ…RSSPNNETKN (96 aa). A compositionally biased stretch (low complexity) spans 1337–1347; the sequence is STQSSPPSNSR. The span at 1348-1358 shows a compositional bias: basic and acidic residues; that stretch reads SDMRGKEEARH. Low complexity predominate over residues 1380–1403; it reads TKTQTGQEQELQQEQQDQGATAEQ. Residues 1404 to 1416 are compositionally biased toward basic and acidic residues; it reads LVDKDKEENKENR.

The protein belongs to the NTE family. Interacts with Pka-C3; interaction inhibits the catalytic function of Pka-C3 and the esterase activity of sws. As to expression, isoform A and isoform B are expressed in the entire brain cortex; cortical cell bodies of adult brain. Sws and Pka-C3 are colocalized in all neurons.

The protein resides in the endoplasmic reticulum membrane. The enzyme catalyses a 1-acyl-sn-glycero-3-phosphocholine + H2O = sn-glycerol 3-phosphocholine + a fatty acid + H(+). Functionally, phospholipase B that deacylates intracellular phosphatidylcholine (PtdCho), generating glycerophosphocholine (GroPtdCho). This deacylation occurs at both sn-2 and sn-1 positions of PtdCho. Its specific chemical modification by certain organophosphorus (OP) compounds leads to distal axonopathy. Plays a role in the signaling mechanism between neurons and glia that regulates glia wrapping during development of the adult brain. Essential for membrane lipid homeostasis and cell survival in both neurons and glia of the adult brain. The protein is Neuropathy target esterase sws (sws) of Drosophila melanogaster (Fruit fly).